We begin with the raw amino-acid sequence, 186 residues long: Putative 5'(3')-deoxyribonucleotidase (186 aa).

The protein belongs to the 5'(3')-deoxyribonucleotidase family. Mg(2+) is required as a cofactor.

Dephosphorylates the 5' and 2'(3')-phosphates of deoxyribonucleotides. This chain is Putative 5'(3')-deoxyribonucleotidase, found in Bordetella parapertussis (strain 12822 / ATCC BAA-587 / NCTC 13253).